Reading from the N-terminus, the 130-residue chain is Small ribosomal subunit protein uS11c (130 aa).

This sequence belongs to the universal ribosomal protein uS11 family. As to quaternary structure, part of the 30S ribosomal subunit.

The protein resides in the plastid. It is found in the chloroplast. The sequence is that of Small ribosomal subunit protein uS11c from Pinus thunbergii (Japanese black pine).